A 153-amino-acid chain; its full sequence is MVKAVAVLSSSEGVSGTIFFSQEAEGAPTTVTGDLSGLKPGPHGFHVHALGDTTNGCMSTGPHYNPHGKDHGAPDDEHRHAGDLGNVTVGEDGTAKFTIVDKQIPLIGAQSIIGRAVVVHADPDDLGKGGHELSKTTGNAGGRVACGIIGLQG.

His-46, His-48, and His-63 together coordinate Cu cation. Cysteines 57 and 146 form a disulfide. Residues His-63, His-71, His-80, and Asp-83 each contribute to the Zn(2+) site. Cu cation is bound at residue His-120.

It belongs to the Cu-Zn superoxide dismutase family. Homodimer. Cu cation is required as a cofactor. It depends on Zn(2+) as a cofactor.

The protein localises to the cytoplasm. It catalyses the reaction 2 superoxide + 2 H(+) = H2O2 + O2. Its function is as follows. Destroys radicals which are normally produced within the cells and which are toxic to biological systems. The protein is Superoxide dismutase [Cu-Zn] (SODCC) of Solidago canadensis var. scabra (Tall goldenrod).